A 99-amino-acid polypeptide reads, in one-letter code: Aspartyl/glutamyl-tRNA(Asn/Gln) amidotransferase subunit C (99 aa).

The protein belongs to the GatC family. In terms of assembly, heterotrimer of A, B and C subunits.

It carries out the reaction L-glutamyl-tRNA(Gln) + L-glutamine + ATP + H2O = L-glutaminyl-tRNA(Gln) + L-glutamate + ADP + phosphate + H(+). The enzyme catalyses L-aspartyl-tRNA(Asn) + L-glutamine + ATP + H2O = L-asparaginyl-tRNA(Asn) + L-glutamate + ADP + phosphate + 2 H(+). Allows the formation of correctly charged Asn-tRNA(Asn) or Gln-tRNA(Gln) through the transamidation of misacylated Asp-tRNA(Asn) or Glu-tRNA(Gln) in organisms which lack either or both of asparaginyl-tRNA or glutaminyl-tRNA synthetases. The reaction takes place in the presence of glutamine and ATP through an activated phospho-Asp-tRNA(Asn) or phospho-Glu-tRNA(Gln). The sequence is that of Aspartyl/glutamyl-tRNA(Asn/Gln) amidotransferase subunit C from Sulfurihydrogenibium sp. (strain YO3AOP1).